The sequence spans 560 residues: Eukaryotic translation initiation factor 3 subunit D-1 (560 aa).

A disordered region spans residues 98-166 (VQKPPHQRGR…RGPPPKMRES (69 aa)). The segment covering 100-121 (KPPHQRGRFRNMRNSRSGRGRN) has biased composition (basic residues). Residue Thr-128 is modified to Phosphothreonine. Positions 147–156 (GRGMGKKFGH) are enriched in basic residues. The RNA gate stretch occupies residues 291–305 (EFDLLTVNESSVEPP).

The protein belongs to the eIF-3 subunit D family. Component of the eukaryotic translation initiation factor 3 (eIF-3) complex. The eIF-3 complex interacts with pix.

It is found in the cytoplasm. In terms of biological role, mRNA cap-binding component of the eukaryotic translation initiation factor 3 (eIF-3) complex, which is involved in protein synthesis of a specialized repertoire of mRNAs and, together with other initiation factors, stimulates binding of mRNA and methionyl-tRNAi to the 40S ribosome. The eIF-3 complex specifically targets and initiates translation of a subset of mRNAs involved in cell proliferation. In the eIF-3 complex, eif3d specifically recognizes and binds the 7-methylguanosine cap of a subset of mRNAs. The protein is Eukaryotic translation initiation factor 3 subunit D-1 of Drosophila sechellia (Fruit fly).